Consider the following 426-residue polypeptide: Probable imidazolonepropionase (426 aa).

Residues Tyr159 and His192 each coordinate 4-imidazolone-5-propanoate. Tyr159 is a binding site for N-formimidoyl-L-glutamate. His260 is a Fe(3+) binding site. Zn(2+) is bound at residue His260. Glu263 is a binding site for 4-imidazolone-5-propanoate. Asp334 contacts Fe(3+). Asp334 lines the Zn(2+) pocket. Asn336 contacts N-formimidoyl-L-glutamate.

The protein belongs to the metallo-dependent hydrolases superfamily. HutI family. Requires Zn(2+) as cofactor. Fe(3+) serves as cofactor.

The enzyme catalyses 4-imidazolone-5-propanoate + H2O = N-formimidoyl-L-glutamate. Its pathway is amino-acid degradation; L-histidine degradation into L-glutamate; N-formimidoyl-L-glutamate from L-histidine: step 3/3. The sequence is that of Probable imidazolonepropionase (Amdhd1) from Mus musculus (Mouse).